Here is a 208-residue protein sequence, read N- to C-terminus: Ribosomal RNA large subunit methyltransferase E (208 aa).

Residues Gly62, Trp64, Asp82, Asp98, and Asp123 each contribute to the S-adenosyl-L-methionine site. Lys163 functions as the Proton acceptor in the catalytic mechanism.

This sequence belongs to the class I-like SAM-binding methyltransferase superfamily. RNA methyltransferase RlmE family.

The protein resides in the cytoplasm. It catalyses the reaction uridine(2552) in 23S rRNA + S-adenosyl-L-methionine = 2'-O-methyluridine(2552) in 23S rRNA + S-adenosyl-L-homocysteine + H(+). Its function is as follows. Specifically methylates the uridine in position 2552 of 23S rRNA at the 2'-O position of the ribose in the fully assembled 50S ribosomal subunit. The chain is Ribosomal RNA large subunit methyltransferase E from Actinobacillus pleuropneumoniae serotype 5b (strain L20).